Consider the following 397-residue polypeptide: DNA excision repair protein ERCC-8 (397 aa).

5 WD repeats span residues 41–81 (IHGS…RQPH), 97–137 (VHKY…AADV), 184–224 (GHRQ…GCLL), 243–282 (AHNG…NTLV), and 332–371 (GHYK…PVPD). A phosphoserine mark is found at serine 391, serine 392, and serine 393.

As to quaternary structure, part of the CSA complex (also named DCX(ERCC8) complex), a DCX E3 ubiquitin-protein ligase complex containing ERCC8, RBX1, DDB1 and CUL4A; the CSA complex interacts with RNA polymerase II; upon UV irradiation it interacts with the COP9 signalosome and preferentially with the hyperphosphorylated form of RNA polymerase II. Interacts with ERCC6/CSB (via CIM motif); promoting recruitment to lesion-stalled RNA polymerase II (Pol II). Interacts with KIAA1530/UVSSA. Interacts with a subunit of RNA polymerase II TFIIH.

It localises to the nucleus. Its subcellular location is the chromosome. The protein localises to the nucleus matrix. It functions in the pathway protein modification; protein ubiquitination. Substrate-recognition component of the CSA complex, a DCX (DDB1-CUL4-X-box) E3 ubiquitin-protein ligase complex, involved in transcription-coupled nucleotide excision repair (TC-NER), a process during which RNA polymerase II-blocking lesions are rapidly removed from the transcribed strand of active genes. Following recruitment to lesion-stalled RNA polymerase II (Pol II), the CSA complex mediates ubiquitination of Pol II subunit POLR2A/RPB1 at 'Lys-1268', a critical TC-NER checkpoint, governing RNA Pol II stability and initiating DNA damage excision by TFIIH recruitment. The CSA complex also promotes the ubiquitination and subsequent proteasomal degradation of ERCC6/CSB in a UV-dependent manner; ERCC6 degradation is essential for the recovery of RNA synthesis after transcription-coupled repair. Also plays a role in DNA double-strand breaks (DSSBs) repair by non-homologous end joining (NHEJ). This chain is DNA excision repair protein ERCC-8, found in Mus musculus (Mouse).